The following is a 406-amino-acid chain: Succinylornithine transaminase (406 aa).

Lys252 is subject to N6-(pyridoxal phosphate)lysine.

The protein belongs to the class-III pyridoxal-phosphate-dependent aminotransferase family. AstC subfamily. Requires pyridoxal 5'-phosphate as cofactor.

It carries out the reaction N(2)-succinyl-L-ornithine + 2-oxoglutarate = N-succinyl-L-glutamate 5-semialdehyde + L-glutamate. It functions in the pathway amino-acid degradation; L-arginine degradation via AST pathway; L-glutamate and succinate from L-arginine: step 3/5. In terms of biological role, catalyzes the transamination of N(2)-succinylornithine and alpha-ketoglutarate into N(2)-succinylglutamate semialdehyde and glutamate. Can also act as an acetylornithine aminotransferase. The sequence is that of Succinylornithine transaminase from Escherichia coli (strain SMS-3-5 / SECEC).